The following is a 129-amino-acid chain: UPF0325 protein Ent638_0703 (129 aa).

Belongs to the UPF0325 family.

This chain is UPF0325 protein Ent638_0703, found in Enterobacter sp. (strain 638).